The following is a 159-amino-acid chain: Heat shock protein beta-9 (159 aa).

Positions L36–L147 constitute a sHSP domain.

It belongs to the small heat shock protein (HSP20) family. In terms of tissue distribution, testis specific.

The protein resides in the cytoplasm. The protein localises to the nucleus. The chain is Heat shock protein beta-9 (HSPB9) from Homo sapiens (Human).